Reading from the N-terminus, the 553-residue chain is Pumilio domain-containing protein 5 (553 aa).

Pumilio repeat units follow at residues 146–184 (DVVS…VLFD), 185–223 (KLTE…RLVR), 224–260 (KMCD…KLVE), 261–296 (KISS…SFFV), 297–335 (KFLC…HCFN), 347–384 (SVAR…TIIE), 386–421 (CLLR…EMMD), and 432–472 (ETNR…KMVA). The interval 499–514 (FSSGKKIIESLQKLNV) is RNA-binding.

In terms of tissue distribution, detected in differentiating oocytes with highest levels observed in developing ooctyes in the distal portion of the proximal gonad.

Its subcellular location is the cytoplasm. It localises to the P-body. RNA-binding protein that binds to the consensus sequence 5'-CUCUGUAUCUUGU-3' in mRNA 3'-UTRs and modulates mRNA expression and stability. Functions redundantly with puf-6 and puf-7 in oocyte formation and organization, early embryonic cell divisions, and repression of expression of glp-1 and other maternal mRNAs in late oogenesis. The polypeptide is Pumilio domain-containing protein 5 (Caenorhabditis elegans).